A 1071-amino-acid polypeptide reads, in one-letter code: SLIT-ROBO Rho GTPase-activating protein 2 (1071 aa).

The region spanning 22–325 is the F-BAR domain; sequence KEIRAQLTEQ…AVENLDATSD (304 aa). Residues 181-203 are compositionally biased toward basic and acidic residues; the sequence is LKEAEKQEEKQIGKSVKQEDRQT. The interval 181-211 is disordered; it reads LKEAEKQEEKQIGKSVKQEDRQTPRSPDSTA. Ser206 carries the phosphoserine modification. Residues 363 to 401 are a coiled coil; it reads QSELVQRRQQLQSRLSTLKIENEEVKKTMEATLQTIQDI. 5 positions are modified to phosphoserine: Ser427, Ser500, Ser691, Ser695, and Ser724. The 191-residue stretch at 489-679 folds into the Rho-GAP domain; sequence ARRSSTVRKQ…TIIIQHENIF (191 aa). The disordered stretch occupies residues 703-726; that stretch reads THGETISAEDSTQDVTAEHHTSDD. An SH3 domain is found at 728–787; the sequence is CEPIEAIAKFDYVGRTARELSFKKGASLLLYQRASDDWWEGRHNGIDGLIPHQYIVVQDT. Disordered stretches follow at residues 794-820 and 835-936; these read RSSP…GASC and NKQR…NHRP. Ser795 is subject to Phosphoserine. Composition is skewed to polar residues over residues 857–867, 874–885, and 897–907; these read LGSSLTDSSSP, RPSSQPIMSQNL, and GHGSLNSISRH. Ser916 carries the phosphoserine modification. A compositionally biased stretch (polar residues) spans 919–933; it reads IRKTATAGRSKSFNN. Symmetric dimethylarginine; by PRMT5 is present on Arg927. Ser930 is modified (phosphoserine). Residues 940–968 adopt a coiled-coil conformation; sequence EVIAQDIEATMNSALNELQELERQSSAKH. A disordered region spans residues 983 to 1012; that stretch reads SPVVAPTSEPSSPLHTQLLKDPEPAFQRSA. 4 positions are modified to phosphoserine: Ser990, Ser994, Ser1013, and Ser1027. A disordered region spans residues 1029-1071; sequence KMAAPVKPPATRPKPTVFPKTNATSPGVNSSASPQSTDKSCTV. The segment covering 1047–1071 has biased composition (polar residues); sequence PKTNATSPGVNSSASPQSTDKSCTV.

As to quaternary structure, homodimer. Forms a heterooligomer with SRGAP1 and SRGAP3 through its F-BAR domain. Interacts (via SH3 domain) with GPHN. Interacts (via SH3 domain) with FMNL1 (activated by RAC1); regulates the actin filament severing activity of FMNL1 and actin dynamics. Interacts (via SH3 domain) with FMNL3. Interacts with RAC1; specifically stimulates RAC1 GTPase activity. Interacts (via F-BAR domain) with HOMER1. Interacts with ROBO1 and ROBO2. Interacts with FASLG. Interacts with PRMT5. Post-translationally, methylation at Arg-927 is required for the stimulation of cell migration, dimerization and localization at the plasma membrane protrusions.

It is found in the cell membrane. It localises to the cell projection. The protein localises to the dendritic spine. The protein resides in the postsynaptic density. Its subcellular location is the postsynaptic cell membrane. It is found in the lamellipodium. It localises to the cytoplasmic vesicle. The protein localises to the phagosome. The protein resides in the nucleus. Its subcellular location is the cytoplasm. It is found in the cytosol. Postsynaptic RAC1 GTPase activating protein (GAP) that plays a key role in neuronal morphogenesis and migration mainly during development of the cerebral cortex. Regulates excitatory and inhibitory synapse maturation and density in cortical pyramidal neurons. SRGAP2/SRGAP2A limits excitatory and inhibitory synapse density through its RAC1-specific GTPase activating activity, while it promotes maturation of both excitatory and inhibitory synapses through its ability to bind to the postsynaptic scaffolding protein HOMER1 at excitatory synapses, and the postsynaptic protein GPHN at inhibitory synapses. Mechanistically, acts by binding and deforming membranes, thereby regulating actin dynamics to regulate cell migration and differentiation. Promotes cell repulsion and contact inhibition of locomotion: localizes to protrusions with curved edges and controls the duration of RAC1 activity in contact protrusions. In non-neuronal cells, may also play a role in cell migration by regulating the formation of lamellipodia and filopodia. In Rattus norvegicus (Rat), this protein is SLIT-ROBO Rho GTPase-activating protein 2.